The sequence spans 877 residues: Leucine--tRNA ligase (877 aa).

Positions 50 to 60 (PYPSGKLHMGH) match the 'HIGH' region motif. A 'KMSKS' region motif is present at residues 634 to 638 (KMSKS). Position 637 (Lys-637) interacts with ATP.

This sequence belongs to the class-I aminoacyl-tRNA synthetase family.

Its subcellular location is the cytoplasm. The catalysed reaction is tRNA(Leu) + L-leucine + ATP = L-leucyl-tRNA(Leu) + AMP + diphosphate. This is Leucine--tRNA ligase from Hydrogenovibrio crunogenus (strain DSM 25203 / XCL-2) (Thiomicrospira crunogena).